Here is an 837-residue protein sequence, read N- to C-terminus: Periplasmic nitrate reductase (837 aa).

Residues 1–32 constitute a signal peptide (tat-type signal); it reads MTSPKLDRRQMLKLEAAAIAAAAAGLPVPALA. Positions 44–100 constitute a 4Fe-4S Mo/W bis-MGD-type domain; it reads LKWDKAACRFCGTGCSVMVATKENRVVATHGDIKAEVNRGLNCVKGYFLSKIMYGHD. [4Fe-4S] cluster-binding residues include C51, C54, C58, and C86. Residues K88, Q155, N180, C184, 217–224, 248–252, 267–269, M378, Q382, N488, 514–515, K537, D564, and 724–733 contribute to the Mo-bis(molybdopterin guanine dinucleotide) site; these read WGSNMAEM, STFEH, QTD, SD, and TGRVLEHWHS. A substrate-binding site is contributed by W800. Mo-bis(molybdopterin guanine dinucleotide) is bound by residues N808 and K825.

This sequence belongs to the prokaryotic molybdopterin-containing oxidoreductase family. NasA/NapA/NarB subfamily. Component of the periplasmic nitrate reductase NapAB complex composed of NapA and NapB. [4Fe-4S] cluster is required as a cofactor. The cofactor is Mo-bis(molybdopterin guanine dinucleotide). Post-translationally, predicted to be exported by the Tat system. The position of the signal peptide cleavage has not been experimentally proven.

It localises to the periplasm. It catalyses the reaction 2 Fe(II)-[cytochrome] + nitrate + 2 H(+) = 2 Fe(III)-[cytochrome] + nitrite + H2O. In terms of biological role, catalytic subunit of the periplasmic nitrate reductase complex NapAB. Receives electrons from NapB and catalyzes the reduction of nitrate to nitrite. This is Periplasmic nitrate reductase from Bradyrhizobium diazoefficiens (strain JCM 10833 / BCRC 13528 / IAM 13628 / NBRC 14792 / USDA 110).